Here is a 107-residue protein sequence, read N- to C-terminus: Glutaredoxin 4 (107 aa).

In terms of domain architecture, Glutaredoxin spans 4 to 106; that stretch reads LDKIKKQISE…TLLAEVAAKH (103 aa). Lysine 21 lines the glutathione pocket. Position 29 (cysteine 29) interacts with [2Fe-2S] cluster. Glutathione is bound by residues arginine 58, phenylalanine 70, and 83–84; that span reads CD.

The protein belongs to the glutaredoxin family. Monothiol subfamily. Homodimer.

It localises to the cytoplasm. In terms of biological role, monothiol glutaredoxin involved in the biogenesis of iron-sulfur clusters. The protein is Glutaredoxin 4 (grxD) of Haemophilus influenzae (strain ATCC 51907 / DSM 11121 / KW20 / Rd).